The following is a 363-amino-acid chain: MNELLLNVVDPLHQWFLGLGDGGVLLWTVLKILLIAVPVIVTVAFYVVWERKLIGWMHVRHGPMYVGMGIFQAFADVFKLLFKEILQPSSSHKAMFIIAPLLTLAPAFAAWSVVPFDAKLVLSNANVGLLYLLAMTSLGVYGIILAGWASNSKYAFLGAMRSAAQVVSYEIAMGFALVGVMIASGSVNLSQIVFAQAGSSGFFDWFLIPLFPLFIVYWVSGVAETNRAPFDVVEGESEIVAGHMVEYSGGAFALFFLAEYANMILVSFLISIFFLGGWLSPIQGWVTADISPWVNWLWTGGWPWLLMKVFFFASAYIWFRASFPRYRYDQIMRLGWKVFIPLTIVWIAVTALMVFYGVIQKGV.

Helical transmembrane passes span 29 to 49 (VLKI…YVVW), 62 to 82 (GPMY…KLLF), 96 to 116 (FIIA…VVPF), 127 to 147 (VGLL…ILAG), 163 to 183 (AAQV…VMIA), 202 to 222 (FFDW…VSGV), 239 to 257 (IVAG…LFFL), 264 to 286 (ILVS…QGWV), 299 to 319 (TGGW…YIWF), and 339 to 359 (FIPL…YGVI).

It belongs to the complex I subunit 1 family. In terms of assembly, NDH-1 is composed of 14 different subunits. Subunits NuoA, H, J, K, L, M, N constitute the membrane sector of the complex.

It is found in the cell inner membrane. It carries out the reaction a quinone + NADH + 5 H(+)(in) = a quinol + NAD(+) + 4 H(+)(out). Its function is as follows. NDH-1 shuttles electrons from NADH, via FMN and iron-sulfur (Fe-S) centers, to quinones in the respiratory chain. The immediate electron acceptor for the enzyme in this species is believed to be ubiquinone. Couples the redox reaction to proton translocation (for every two electrons transferred, four hydrogen ions are translocated across the cytoplasmic membrane), and thus conserves the redox energy in a proton gradient. This subunit may bind ubiquinone. The sequence is that of NADH-quinone oxidoreductase subunit H from Xanthomonas campestris pv. campestris (strain 8004).